A 347-amino-acid polypeptide reads, in one-letter code: uncharacterized protein (347 aa).

Disordered regions lie at residues 1 to 40 (MAQE…SNSM), 72 to 92 (SCED…IQGS), 133 to 158 (SDST…QLTL), 173 to 209 (ENQK…QVSH), and 306 to 347 (EDPR…PPDF). Over residues 15–25 (PGQNITETTTD) the composition is skewed to polar residues. Over residues 143-154 (GDNKDKHPKEKT) the composition is skewed to basic and acidic residues. Residues 179-194 (KDDDSVFPESAQEEDS) are compositionally biased toward acidic residues. The segment covering 195 to 209 (QLPSSSLPGMAQVSH) has biased composition (polar residues). Residues 306 to 318 (EDPREANERPREL) are compositionally biased toward basic and acidic residues. Residues 319–330 (ARKKRFSYRSKR) show a composition bias toward basic residues.

This is an uncharacterized protein from Bos taurus (Bovine).